The primary structure comprises 414 residues: Alanine--glyoxylate aminotransferase (414 aa).

The transit peptide at 1–23 (MFRALARASATLGPQVAGWARTM) directs the protein to the mitochondrion. Residue Lys-231 is modified to N6-(pyridoxal phosphate)lysine. N6-acetyllysine; alternate is present on Lys-247. At Lys-247 the chain carries N6-succinyllysine; alternate. 2 positions are modified to N6-acetyllysine: Lys-256 and Lys-334. Residue Arg-382 participates in substrate binding. The Microbody targeting signal motif lies at 412-414 (NKL).

It belongs to the class-V pyridoxal-phosphate-dependent aminotransferase family. In terms of assembly, homodimer. Requires pyridoxal 5'-phosphate as cofactor.

Its subcellular location is the peroxisome. The protein resides in the mitochondrion matrix. It carries out the reaction L-serine + pyruvate = 3-hydroxypyruvate + L-alanine. The enzyme catalyses glyoxylate + L-alanine = glycine + pyruvate. Catalyzes the transamination of glyoxylate to glycine and contributes to the glyoxylate detoxification. Functionally, catalyzes the transamination between L-serine and pyruvate and contributes to gluconeogenesis from the L-serine metabolism. The chain is Alanine--glyoxylate aminotransferase from Felis catus (Cat).